The chain runs to 522 residues: Signal transduction histidine-protein kinase/phosphatase MprB (522 aa).

At 1-30 (MIRLYRPQRPPLRAPLRATPSLSLRWRVML) the chain is on the cytoplasmic side. Residues 31–51 (LAMSMVAMVVVLMAFAVYAVI) form a helical membrane-spanning segment. Residues 52-167 (SAALYSDIDN…PTEAVMNKLR (116 aa)) lie on the Extracellular side of the membrane. A helical membrane pass occupies residues 168-188 (WVLLIVGGVGVAVAAVAGGMV). Topologically, residues 189-522 (TRAGLRPVAR…SVDSQSARAR (334 aa)) are cytoplasmic. In terms of domain architecture, HAMP spans 190 to 242 (RAGLRPVARLTEAAERVARTDDLRPIPVFGSDELARLTESFNLMLRALAESRE). The region spanning 250–470 (DAGHELRTPL…SFYVLLPGRS (221 aa)) is the Histidine kinase domain. Position 253 is a phosphohistidine; by autocatalysis (His253). The interval 467-522 (PGRSLPPAGHSTPAGESETDQAEAATDPAVPVAGDTANSRESANVISVDSQSARAR) is disordered. A compositionally biased stretch (polar residues) spans 502–522 (TANSRESANVISVDSQSARAR).

Mg(2+) is required as a cofactor. Requires Mn(2+) as cofactor. In terms of processing, autophosphorylated.

The protein localises to the cell membrane. It catalyses the reaction ATP + protein L-histidine = ADP + protein N-phospho-L-histidine.. Member of the two-component regulatory system MprB/MprA which contributes to maintaining a balance among several systems involved in stress resistance and is required for establishment and maintenance of persistent infection in the host. In response to environmental signals MprB acts both as a membrane-associated protein kinase that undergoes autophosphorylation and subsequently transfers the phosphate to MprA, and a protein phosphatase that dephosphorylates phospho-MprA. This Mycolicibacterium paratuberculosis (strain ATCC BAA-968 / K-10) (Mycobacterium paratuberculosis) protein is Signal transduction histidine-protein kinase/phosphatase MprB (mprB).